A 940-amino-acid polypeptide reads, in one-letter code: Insulin receptor substrate 1 (940 aa).

A PH domain is found at 8-109; it reads GMVLSGYHKK…WLDKLLLLQR (102 aa). The IRS-type PTB domain maps to 122–236; sequence YEHVWQVIIQ…SAMSAKTDSN (115 aa). Phosphoserine occurs at positions 284, 285, and 340. The residue at position 407 (Y407) is a Phosphotyrosine; by INSR. Residues 407-410 carry the YXXM motif 1 motif; it reads YIPM. The span at 523-540 shows a compositional bias: polar residues; sequence NRSQNNISKEGPISGTST. The segment at 523-549 is disordered; it reads NRSQNNISKEGPISGTSTNREKKSTSA. A Phosphoserine modification is found at S548. A YXXM motif 2 motif is present at residues 639–642; that stretch reads YLEM. Y883 is subject to Phosphotyrosine; by INSR. The interval 895–915 is disordered; the sequence is NPAKYLKRGSRESPPVATCAE. Residues S904 and S907 each carry the phosphoserine modification. Y920 bears the Phosphotyrosine; by INSR mark.

In terms of assembly, bindings to phosphatidylinositol 3-kinase and SHP2.

In terms of biological role, activates phosphatidylinositol 3-kinase when bound to the regulatory p85 subunit. May mediate the control of various cellular processes by insulin-like peptides. When phosphorylated by the insulin receptor binds specifically to various cellular proteins containing SH2 domains. Involved in control of cell proliferation, cell size, and body and organ growth throughout development. Also has a role in a signaling pathway controlling the physiological response required to endure periods of low nutrient conditions. Insulin/insulin-like growth factor (IGF) signaling pathway has a role in regulating aging and is necessary in the ovary for vitellogenic maturation. The sequence is that of Insulin receptor substrate 1 from Drosophila ananassae (Fruit fly).